A 340-amino-acid chain; its full sequence is Ribosomal RNA small subunit methyltransferase C (340 aa).

It belongs to the methyltransferase superfamily. RsmC family. As to quaternary structure, monomer.

The protein resides in the cytoplasm. It catalyses the reaction guanosine(1207) in 16S rRNA + S-adenosyl-L-methionine = N(2)-methylguanosine(1207) in 16S rRNA + S-adenosyl-L-homocysteine + H(+). Functionally, specifically methylates the guanine in position 1207 of 16S rRNA in the 30S particle. The protein is Ribosomal RNA small subunit methyltransferase C of Vibrio cholerae serotype O1 (strain ATCC 39541 / Classical Ogawa 395 / O395).